The chain runs to 196 residues: Alpha-crystallin A chain (196 aa).

At Met1 the chain carries N-acetylmethionine. The required for complex formation with BFSP1 and BFSP2 stretch occupies residues 1–63 (MDVTIQHPWF…RTVLDSGISE (63 aa)). Gln6 carries the post-translational modification Deamidated glutamine; partial. Ser45 carries the phosphoserine modification. At Gln50 the chain carries Deamidated glutamine; partial. The region spanning 76 to 185 (HAGNPKNNPG…GHSERAIPVS (110 aa)) is the sHSP domain. Lys93 and Lys122 each carry N6-acetyllysine. Zn(2+) is bound at residue His123. The residue at position 124 (Asn124) is a Deamidated asparagine; partial. Zn(2+) contacts are provided by Glu125 and His130. Ser145 is subject to Phosphoserine. Asn146 carries the deamidated asparagine; partial modification. Residues 168–196 (KVQSGLDAGHSERAIPVSREEKPSSAPSS) form a disordered region. The residue at position 170 (Gln170) is a Deamidated glutamine; partial. The segment covering 176–190 (GHSERAIPVSREEKP) has biased composition (basic and acidic residues). Position 177 (His177) interacts with Zn(2+). The O-linked (GlcNAc) serine glycan is linked to Ser185.

The protein belongs to the small heat shock protein (HSP20) family. As to quaternary structure, heteropolymer composed of three CRYAA and one CRYAB subunits. Inter-subunit bridging via zinc ions enhances stability, which is crucial as there is no protein turn over in the lens. Can also form homodimers and homotetramers (dimers of dimers) which serve as the building blocks of homooligomers. Within homooligomers, the zinc-binding motif is created from residues of 3 different molecules. His-123 and Glu-125 from one molecule are ligands of the zinc ion, and His-130 and His-177 residues from additional molecules complete the site with tetrahedral coordination geometry. Part of a complex required for lens intermediate filament formation composed of BFSP1, BFSP2 and CRYAA. Post-translationally, acetylation at Lys-93 may increase chaperone activity. Undergoes age-dependent proteolytical cleavage at the C-terminus. Cleavage by m-calpain produces specifically alpha-crystallin A(1-162), cleavage by Capn3/Lp82 produces specifically alpha-crystallin A(1-168) which is the major truncated form during normal maturation and induced cataract formation. As to expression, highly expressed in eye lens. Also expressed in non-lenticular tissues such as brain, spleen, liver, lung, skin, small intestine and a several epithelial and fibroblast cell lines with highest levels in spleen.

It localises to the cytoplasm. It is found in the nucleus. In terms of biological role, contributes to the transparency and refractive index of the lens. Acts as a chaperone, preventing aggregation of various proteins under a wide range of stress conditions. Required for the correct formation of lens intermediate filaments as part of a complex composed of BFSP1, BFSP2 and CRYAA. Inhibits bacterial growth in the lens. The protein is Alpha-crystallin A chain (Cryaa) of Rattus norvegicus (Rat).